The following is a 402-amino-acid chain: Multidrug resistance protein MdtH (402 aa).

The Cytoplasmic portion of the chain corresponds to 1–12 (MSRVSQARNLGK). A helical transmembrane segment spans residues 13–33 (YFLLIDNMLVVLGFFVVFPLI). The Periplasmic portion of the chain corresponds to 34 to 98 (SIRFVDQMGW…GFATMGIAHE (65 aa)). The chain crosses the membrane as a helical span at residues 99–116 (PWLLWFSCLLSGLGGTLF). Over 117–138 (DPPRSALVVKLIRPQQRGRFFS) the chain is Cytoplasmic. A helical membrane pass occupies residues 139–159 (LLMMQDSASAVIGALLGSWLL). At 160 to 164 (QYDFR) the chain is on the periplasmic side. The helical transmembrane segment at 165–185 (LVCATGPVLFVLCAAFNAWLL) threads the bilayer. Residues 186-213 (PAWKLSTVRTPVREGMTRVMRDKRFVTY) lie on the Cytoplasmic side of the membrane. A helical membrane pass occupies residues 214–234 (VLTLAGYYMLAVQVMLMLPIM). The Periplasmic portion of the chain corresponds to 235-243 (VNDVAGAPS). The chain crosses the membrane as a helical span at residues 244 to 264 (AVKWMYAIEACLSLTLLYPIA). Over 265-276 (RWSEKHFRLEHR) the chain is Cytoplasmic. A helical transmembrane segment spans residues 277–297 (LMAGLLIMSLSMMPVGMVSGL). The Periplasmic segment spans residues 298–299 (QQ). Residues 300 to 320 (LFTLICLFYIGSIIAEPARET) form a helical membrane-spanning segment. The Cytoplasmic portion of the chain corresponds to 321–339 (LSASLADARARGSYMGFSR). Residues 340–360 (LGLAIGGAIGYIGGGWLFDLG) form a helical membrane-spanning segment. At 361-367 (KSAHQPE) the chain is on the periplasmic side. Residues 368–388 (LPWMMLGIIGIFTFLALGWQF) traverse the membrane as a helical segment. The Cytoplasmic portion of the chain corresponds to 389–402 (SQKRAARRLLERDA).

The protein belongs to the major facilitator superfamily. DHA1 family. MdtH (TC 2.A.1.2.21) subfamily.

The protein localises to the cell inner membrane. The protein is Multidrug resistance protein MdtH of Shigella flexneri serotype 5b (strain 8401).